The following is a 484-amino-acid chain: MFPNSILGRPPFTPNHQQHNNFFTLSPTVYSHQQLIDAQFNFQNADLSRAVSLQQLTYGNVSPIQTSASPLFRGRKRLSDEKNLPLDGKRQRFHSPHQEPTVVNQIVPLSGERRYSMPPLFHTHYVPDIVRCVPPFREIAFLEPREITLPEAKDKLSQQILELFETCQQQISDLKKKELCRTQLQREIQLLFPQSRLFLVGSSLNGFGTRSSDGDLCLVVKEEPCFFQVNQKTEARHILTLVHKHFCTRLSGYIERPQLIRAKVPIVKFRDKVSCVEFDLNVNNIVGIRNTFLLRTYAYLENRVRPLVLVIKKWASHHQINDASRGTLSSYSLVLMVLHYLQTLPEPILPSLQKIYPESFSPAIQLHLVHQAPCNVPPYLSKNESNLGDLLLGFLKYYATEFDWNSQMISVREAKAIPRPDGIEWRNKYICVEEPFDGTNTARAVHEKQKFDMIKDQFLKSWHRLKNKRDLNSILPVRAAVLKR.

S62 and S69 each carry phosphoserine. The tract at residues 72-97 (FRGRKRLSDEKNLPLDGKRQRFHSPH) is disordered. Positions 76-92 (KRLSDEKNLPLDGKRQR) match the Nuclear localization signal motif. Residues 77-90 (RLSDEKNLPLDGKR) show a composition bias toward basic and acidic residues. S95 is modified (phosphoserine). D213 and D215 together coordinate Mg(2+). A PAP-associated domain is found at 386–440 (NLGDLLLGFLKYYATEFDWNSQMISVREAKAIPRPDGIEWRNKYICVEEPFDGTN).

The protein belongs to the DNA polymerase type-B-like family. GLD2 subfamily. As to quaternary structure, interacts with CPEB1, CPEB2, CPSF1 and PABPC1. Interacts with QKI isoform QKI7; promoting recruitment to miRNA miR-122 and miR-122 stabilization. Requires Mg(2+) as cofactor. Mn(2+) serves as cofactor. Expressed in brain. Within brain, it is expressed in cerebellum, hippocampus and medulla.

The protein localises to the cytoplasm. The protein resides in the nucleus. The catalysed reaction is RNA(n) + ATP = RNA(n)-3'-adenine ribonucleotide + diphosphate. Its function is as follows. Cytoplasmic poly(A) RNA polymerase that adds successive AMP monomers to the 3'-end of specific RNAs, forming a poly(A) tail. In contrast to the canonical nuclear poly(A) RNA polymerase, it only adds poly(A) to selected cytoplasmic mRNAs. Does not play a role in replication-dependent histone mRNA degradation. Adds a single nucleotide to the 3' end of specific miRNAs, monoadenylation stabilizes and prolongs the activity of some but not all miRNAs. This Homo sapiens (Human) protein is Poly(A) RNA polymerase GLD2.